The chain runs to 461 residues: Lysosomal proton-coupled steroid conjugate and bile acid symporter SLC46A3 (461 aa).

Positions 1–25 (MKISFIEPAILLYAFAMTLTIPLTA) are cleaved as a signal peptide. Over 26 to 70 (QYVYRRIWEETGNYTFTSSSNVSECEQNKSSSTFAFQEEVQKKAS) the chain is Extracellular. N-linked (GlcNAc...) asparagine glycans are attached at residues N38, N46, and N53. The chain crosses the membrane as a helical span at residues 71–91 (LFSLQVEISGLIPGLVSTFML). Over 92-103 (LSSSDNHGRKLP) the chain is Cytoplasmic. A helical transmembrane segment spans residues 104-124 (MVLSSLGSLGTNLWLCAMSYF). At 125–135 (DLPLQLLVAST) the chain is on the extracellular side. A helical membrane pass occupies residues 136 to 156 (FIGALFGNYTTFWGACFAYIV). The Cytoplasmic portion of the chain corresponds to 157-170 (DQEKEYKHRIIRIA). A helical transmembrane segment spans residues 171–191 (VLDFMLGVVTGLTGLSSGYFI). Over 192–197 (RELGFA) the chain is Extracellular. Residues 198–218 (WSYFIIAVVVLVNLAYILFFL) form a helical membrane-spanning segment. The Cytoplasmic portion of the chain corresponds to 219 to 260 (SDPIKESSSQIVTMSCSESLKDLFYRTYMLFKNGSCKRRSLL). The helical transmembrane segment at 261–281 (CLLIFTLVVYFFVVFGITPVF) threads the bilayer. The Extracellular portion of the chain corresponds to 282 to 301 (TLYELGPPLCWNEVYIGYGS). Residues 302 to 322 (ALGSLSFLSSFLGIWLFSYCL) form a helical membrane-spanning segment. At 323 to 324 (KD) the chain is on the cytoplasmic side. The helical transmembrane segment at 325–345 (IHIAYVGIFTTMVGMMLTAFT) threads the bilayer. At 346–347 (RT) the chain is on the extracellular side. A helical transmembrane segment spans residues 348 to 368 (TLMMFLVRISFFFTIMPLSIL). Over 369–381 (RSMLSKVVHSTEQ) the chain is Cytoplasmic. The helical transmembrane segment at 382 to 402 (GVLFACIAFLETLGGVTSTSA) threads the bilayer. Residues 403–415 (YNGIYSATVAWYP) lie on the Extracellular side of the membrane. The chain crosses the membrane as a helical span at residues 416–436 (GFVFLLSAGLLVLPAVSLCMV). The Cytoplasmic segment spans residues 437–461 (KCIGWEEGSYTLLIHDEPSEHTSDS). Positions 446–449 (YTLL) match the Tyrosine-based lysosomal-sorting motif motif.

The protein belongs to the major facilitator superfamily. SLC46A family.

The protein resides in the lysosome membrane. It carries out the reaction estrone 3-sulfate(out) + n H(+)(out) = estrone 3-sulfate(in) + n H(+)(in). It catalyses the reaction 25-hydroxyvitamin D3 sulfate(out) + n H(+)(out) = 25-hydroxyvitamin D3 sulfate(in) + n H(+)(in). The enzyme catalyses cholate(out) + n H(+)(out) = cholate(in) + n H(+)(in). The catalysed reaction is glycocholate(out) + n H(+)(out) = glycocholate(in) + n H(+)(in). It carries out the reaction taurocholate(out) + n H(+)(out) = taurocholate(in) + n H(+)(in). It catalyses the reaction dehydroepiandrosterone 3-sulfate(out) + n H(+)(out) = dehydroepiandrosterone 3-sulfate(in) + n H(+)(in). The enzyme catalyses N-acetyl-D-muramoyl-L-alanyl-D-isoglutamine(out) + n H(+)(out) = N-acetyl-D-muramoyl-L-alanyl-D-isoglutamine(in) + n H(+)(in). The catalysed reaction is 2',3'-cGAMP(out) + n H(+)(out) = 2',3'-cGAMP(in) + n H(+)(in). Its function is as follows. Lysosomal proton-coupled steroid conjugate and bile acid transporter. Preferentially recognizes lipophilic steroid conjugates or bile acis as endogenous substrates and seems to mediate escape from lysosomes to the cytoplasm. Modulates hepatic cytosolic copper homeostasis, maybe acting as a lysosomal copper transporter and sequestering copper ions in the lysosome. Delivers pathogen-associated molecular patterns to cytosolic pattern recognition receptors as part of the innate immune response to microbes. Selectively transports bacterial muramyl dipeptide (MDP) into the cytosol for recognition by NOD2, triggering inflammatory responses. Likely acts as a redundant importer of cyclic GMP-AMP dinucleotides (cGAMPs) in monocyte and macrophage cell lineages. The transport mechanism, its electrogenicity and stoichiometry remain to be elucidated. In Rattus norvegicus (Rat), this protein is Lysosomal proton-coupled steroid conjugate and bile acid symporter SLC46A3 (Slc46a3).